Reading from the N-terminus, the 149-residue chain is CCAAT/enhancer-binding protein gamma (149 aa).

Over residues 1–12 (MSKVSQQNSTPG) the composition is skewed to polar residues. The tract at residues 1–92 (MSKVSQQNST…SKQKAQDTLQ (92 aa)) is disordered. Residue Lys3 forms a Glycyl lysine isopeptide (Lys-Gly) (interchain with G-Cter in SUMO2) linkage. Residues 28–37 (LQQVPQLVPA) are compositionally biased toward low complexity. The segment covering 56–72 (SPMDRNSDEYRQRRERN) has biased composition (basic and acidic residues). The 64-residue stretch at 62 to 125 (SDEYRQRRER…SVLKDLFLEH (64 aa)) folds into the bZIP domain. Positions 66–93 (RQRRERNNMAVKKSRLKSKQKAQDTLQR) are basic motif. Positions 97–118 (LKEENERLEAKIKLLTKELSVL) are leucine-zipper. Positions 128–149 (NLADNVQPSSTENTTNPDKAGQ) are disordered. Residues 131–149 (DNVQPSSTENTTNPDKAGQ) are compositionally biased toward polar residues.

It belongs to the bZIP family. C/EBP subfamily. Binds DNA as a dimer and can form stable heterodimers with CEBPA and CEBPB. Interacts with ZNF638; this interaction increases transcriptional activation.

It localises to the nucleus. In terms of biological role, transcription factor that binds to the promoter and the enhancer regions of target genes. Binds to the enhancer element PRE-I (positive regulatory element-I) of the IL-4 gene. Binds to the promoter and the enhancer of the immunoglobulin heavy chain. Binds to GPE1, a cis-acting element in the G-CSF gene promoter. This chain is CCAAT/enhancer-binding protein gamma (CEBPG), found in Bos taurus (Bovine).